The primary structure comprises 273 residues: Large ribosomal subunit protein uL2 (273 aa).

Disordered stretches follow at residues Pro32–His53 and Arg221–Lys273. A compositionally biased stretch (low complexity) spans Lys39–Arg48.

It belongs to the universal ribosomal protein uL2 family. As to quaternary structure, part of the 50S ribosomal subunit. Forms a bridge to the 30S subunit in the 70S ribosome.

In terms of biological role, one of the primary rRNA binding proteins. Required for association of the 30S and 50S subunits to form the 70S ribosome, for tRNA binding and peptide bond formation. It has been suggested to have peptidyltransferase activity; this is somewhat controversial. Makes several contacts with the 16S rRNA in the 70S ribosome. This Erwinia tasmaniensis (strain DSM 17950 / CFBP 7177 / CIP 109463 / NCPPB 4357 / Et1/99) protein is Large ribosomal subunit protein uL2.